The primary structure comprises 525 residues: GMP synthase [glutamine-hydrolyzing] (525 aa).

The region spanning 8–207 (KILILDFGSQ…ALEICACAAN (200 aa)) is the Glutamine amidotransferase type-1 domain. The active-site Nucleophile is the cysteine 85. Active-site residues include histidine 181 and glutamate 183. The GMPS ATP-PPase domain occupies 208 to 400 (WKPASIIEDA…LGLPYNMLYR (193 aa)). ATP is bound at residue 235 to 241 (SGGVDSS).

As to quaternary structure, homodimer.

It carries out the reaction XMP + L-glutamine + ATP + H2O = GMP + L-glutamate + AMP + diphosphate + 2 H(+). Its pathway is purine metabolism; GMP biosynthesis; GMP from XMP (L-Gln route): step 1/1. Catalyzes the synthesis of GMP from XMP. The polypeptide is GMP synthase [glutamine-hydrolyzing] (Shewanella halifaxensis (strain HAW-EB4)).